The chain runs to 536 residues: Chaperonin GroEL (536 aa).

Residues 29–32 (TLGP), 86–90 (DGTTT), Gly-413, 476–478 (DAA), and Asp-492 contribute to the ATP site.

Belongs to the chaperonin (HSP60) family. In terms of assembly, forms a cylinder of 14 subunits composed of two heptameric rings stacked back-to-back. Interacts with the co-chaperonin GroES.

The protein resides in the cytoplasm. It carries out the reaction ATP + H2O + a folded polypeptide = ADP + phosphate + an unfolded polypeptide.. Together with its co-chaperonin GroES, plays an essential role in assisting protein folding. The GroEL-GroES system forms a nano-cage that allows encapsulation of the non-native substrate proteins and provides a physical environment optimized to promote and accelerate protein folding. This is Chaperonin GroEL from Methanococcus vannielii (strain ATCC 35089 / DSM 1224 / JCM 13029 / OCM 148 / SB).